A 143-amino-acid chain; its full sequence is Large ribosomal subunit protein uL11 (143 aa).

This sequence belongs to the universal ribosomal protein uL11 family. As to quaternary structure, part of the ribosomal stalk of the 50S ribosomal subunit. Interacts with L10 and the large rRNA to form the base of the stalk. L10 forms an elongated spine to which L12 dimers bind in a sequential fashion forming a multimeric L10(L12)X complex. One or more lysine residues are methylated.

Its function is as follows. Forms part of the ribosomal stalk which helps the ribosome interact with GTP-bound translation factors. This is Large ribosomal subunit protein uL11 from Chromohalobacter salexigens (strain ATCC BAA-138 / DSM 3043 / CIP 106854 / NCIMB 13768 / 1H11).